The primary structure comprises 62 residues: Large ribosomal subunit protein bL28 (62 aa).

It belongs to the bacterial ribosomal protein bL28 family.

This is Large ribosomal subunit protein bL28 from Parafrankia sp. (strain EAN1pec).